The following is a 602-amino-acid chain: NADH-quinone oxidoreductase subunit C/D (602 aa).

The tract at residues 1 to 192 (MVNNMTDLTA…DPFELTKAKQ (192 aa)) is NADH dehydrogenase I subunit C. The segment at 216–602 (DFMFLNLGPN…IDFVMSDVDR (387 aa)) is NADH dehydrogenase I subunit D.

The protein in the N-terminal section; belongs to the complex I 30 kDa subunit family. It in the C-terminal section; belongs to the complex I 49 kDa subunit family. As to quaternary structure, NDH-1 is composed of 13 different subunits. Subunits NuoB, CD, E, F, and G constitute the peripheral sector of the complex.

It localises to the cell inner membrane. The catalysed reaction is a quinone + NADH + 5 H(+)(in) = a quinol + NAD(+) + 4 H(+)(out). Functionally, NDH-1 shuttles electrons from NADH, via FMN and iron-sulfur (Fe-S) centers, to quinones in the respiratory chain. The immediate electron acceptor for the enzyme in this species is believed to be ubiquinone. Couples the redox reaction to proton translocation (for every two electrons transferred, four hydrogen ions are translocated across the cytoplasmic membrane), and thus conserves the redox energy in a proton gradient. This chain is NADH-quinone oxidoreductase subunit C/D, found in Klebsiella pneumoniae subsp. pneumoniae (strain ATCC 700721 / MGH 78578).